The following is a 176-amino-acid chain: Sarcoplasmic calcium-binding protein (176 aa).

Threonine 1 carries the post-translational modification N-acetylthreonine. EF-hand domains lie at 3-38 (YLVS…FTDL), 55-90 (KWWD…AFLA), 91-126 (TMTA…FGHE), and 127-160 (NESV…SFVT). Aspartate 16, asparagine 18, aspartate 20, and asparagine 27 together coordinate Ca(2+). Ca(2+) contacts are provided by aspartate 104, aspartate 106, aspartate 108, serine 110, and glutamate 115.

Like parvalbumins, SCPs seem to be more abundant in fast contracting muscles, but no functional relationship can be established from this distribution. This Mizuhopecten yessoensis (Japanese scallop) protein is Sarcoplasmic calcium-binding protein.